The primary structure comprises 183 residues: Photosystem I assembly protein Ycf4 (183 aa).

2 helical membrane passes run 23–43 and 64–84; these read WASV…SSYF and VMSF…LTII.

It belongs to the Ycf4 family.

It is found in the plastid. The protein localises to the chloroplast thylakoid membrane. Functionally, seems to be required for the assembly of the photosystem I complex. This Stigeoclonium helveticum (Green alga) protein is Photosystem I assembly protein Ycf4.